A 403-amino-acid polypeptide reads, in one-letter code: Phosphoglycerate kinase (403 aa).

Residues 21–23 (DFN), Arg-36, 59–62 (HVGR), Arg-119, and Arg-154 each bind substrate. Residues Lys-207, Gly-299, Glu-330, and 357 to 360 (GGDA) each bind ATP.

It belongs to the phosphoglycerate kinase family. In terms of assembly, monomer.

The protein localises to the cytoplasm. It carries out the reaction (2R)-3-phosphoglycerate + ATP = (2R)-3-phospho-glyceroyl phosphate + ADP. The protein operates within carbohydrate degradation; glycolysis; pyruvate from D-glyceraldehyde 3-phosphate: step 2/5. This is Phosphoglycerate kinase (pgk) from Chlamydia trachomatis serovar D (strain ATCC VR-885 / DSM 19411 / UW-3/Cx).